The following is an 83-amino-acid chain: U5-theraphotoxin-Hs1a 5 (83 aa).

A signal peptide spans 1-21 (MKTSMFLTLTGLVLLFVVCYA). The propeptide occupies 22–49 (SESEEKEFPKELPSSIFAADSDFKVEER). 3 disulfide bridges follow: Cys51-Cys63, Cys56-Cys68, and Cys62-Cys75.

This sequence belongs to the neurotoxin 10 (Hwtx-1) family. 51 (Hntx-8) subfamily. Hntx-8 sub-subfamily. As to expression, expressed by the venom gland.

The protein localises to the secreted. In terms of biological role, agglutinates erythrocytes. This is U5-theraphotoxin-Hs1a 5 from Cyriopagopus schmidti (Chinese bird spider).